Here is a 570-residue protein sequence, read N- to C-terminus: Carotenoid cleavage dioxygenase 8, chloroplastic (570 aa).

The transit peptide at 1–56 (MASLITTKAMMSHHHVLSSTRITTLYSDNSIGDQQIKTKPQVPHRLFARRIFGVTR) directs the protein to the chloroplast. Fe cation contacts are provided by histidine 254, histidine 305, histidine 372, and histidine 563.

This sequence belongs to the carotenoid oxygenase family. The cofactor is Fe(2+). As to expression, expressed in flowers, siliques, inflorescence stems, petiole and leaves, and at a much higher level in roots.

It localises to the plastid. It is found in the chloroplast. The catalysed reaction is 9-cis-10'-apo-beta-carotenal + 2 O2 = (2E,4E,6E)-7-hydroxy-4-methylhepta-2,4,6-trienal + (11R)-carlactone. It catalyses the reaction all-trans-10'-apo-beta-carotenal + O2 = (2E,4E,6E)-4-methylocta-2,4,6-trienedial + 13-apo-beta-carotenone. Functionally, involved in strigolactones biosynthesis by cleaving the C(27) 9-cis-10'-apo-beta-carotenal produced by CCD7. Produces the C(19) carlactone and a C(8) hydroxyaldehyde. Also shows lower activity with all-trans-10'-apo-beta-carotenal producing a C(9) dialdehyde and the C(18) 13-apo-beta-carotenone. Strigolactones are hormones that inhibit tillering and shoot branching through the MAX-dependent pathway, contribute to the regulation of shoot architectural response to phosphate-limiting conditions and function as rhizosphere signal that stimulates hyphal branching of arbuscular mycorrhizal fungi and trigger seed germination of root parasitic weeds. Also active on other carotenoid substrates like licopene or zeaxanthin. The protein is Carotenoid cleavage dioxygenase 8, chloroplastic of Arabidopsis thaliana (Mouse-ear cress).